A 130-amino-acid chain; its full sequence is Small ribosomal subunit protein uS9 (130 aa).

The disordered stretch occupies residues 105 to 130 (TRDPRMKERKKYGLHKARKAPQYSKR). The span at 111–130 (KERKKYGLHKARKAPQYSKR) shows a compositional bias: basic residues.

The protein belongs to the universal ribosomal protein uS9 family.

The chain is Small ribosomal subunit protein uS9 from Syntrophomonas wolfei subsp. wolfei (strain DSM 2245B / Goettingen).